A 157-amino-acid chain; its full sequence is Ribosome maturation factor RimP (157 aa).

It belongs to the RimP family.

Its subcellular location is the cytoplasm. Required for maturation of 30S ribosomal subunits. In Lactococcus lactis subsp. cremoris (strain MG1363), this protein is Ribosome maturation factor RimP.